A 706-amino-acid chain; its full sequence is Polyribonucleotide nucleotidyltransferase (706 aa).

The Mg(2+) site is built by aspartate 487 and aspartate 493. One can recognise a KH domain in the interval 553–612 (PRLFTMKINQDKIREVIGKGGETIRAITAETGTEINIAEDGTITIAATTQEAGDAAKKRI). In terms of domain architecture, S1 motif spans 622–692 (GKVYEGTVVK…DRGRVRLSIK (71 aa)).

The protein belongs to the polyribonucleotide nucleotidyltransferase family. Requires Mg(2+) as cofactor.

The protein resides in the cytoplasm. The catalysed reaction is RNA(n+1) + phosphate = RNA(n) + a ribonucleoside 5'-diphosphate. Involved in mRNA degradation. Catalyzes the phosphorolysis of single-stranded polyribonucleotides processively in the 3'- to 5'-direction. The polypeptide is Polyribonucleotide nucleotidyltransferase (Neisseria meningitidis serogroup A / serotype 4A (strain DSM 15465 / Z2491)).